The sequence spans 424 residues: Adenylosuccinate synthetase 1 (424 aa).

Residues Gly12–Lys18 and Gly40–Thr42 contribute to the GTP site. Residue Asp13 is the Proton acceptor of the active site. Positions 13 and 40 each coordinate Mg(2+). Residues Asp13–Lys16, Asn38–His41, Thr127, Arg141, Thr236, and Arg304 each bind IMP. His41 (proton donor) is an active-site residue. Residue Ala300–Arg306 participates in substrate binding. GTP-binding positions include Arg306, Lys332–Asp334, and Gly413–Gly415.

Belongs to the adenylosuccinate synthetase family. Homodimer. Requires Mg(2+) as cofactor.

The protein localises to the cytoplasm. The enzyme catalyses IMP + L-aspartate + GTP = N(6)-(1,2-dicarboxyethyl)-AMP + GDP + phosphate + 2 H(+). It participates in purine metabolism; AMP biosynthesis via de novo pathway; AMP from IMP: step 1/2. Functionally, plays an important role in the de novo pathway of purine nucleotide biosynthesis. Catalyzes the first committed step in the biosynthesis of AMP from IMP. This is Adenylosuccinate synthetase 1 from Methanosarcina acetivorans (strain ATCC 35395 / DSM 2834 / JCM 12185 / C2A).